Consider the following 290-residue polypeptide: Large ribosomal subunit protein uL3 (290 aa).

N5-methylglutamine is present on Gln152. The interval 250 to 290 (ARLAEEQAAAEAESLAQAEAEIAAEGSDAAPEGDADKKDGE) is disordered. Low complexity predominate over residues 255–274 (EQAAAEAESLAQAEAEIAAE).

This sequence belongs to the universal ribosomal protein uL3 family. As to quaternary structure, part of the 50S ribosomal subunit. Forms a cluster with proteins L14 and L19. In terms of processing, methylated by PrmB.

One of the primary rRNA binding proteins, it binds directly near the 3'-end of the 23S rRNA, where it nucleates assembly of the 50S subunit. In Jannaschia sp. (strain CCS1), this protein is Large ribosomal subunit protein uL3.